The sequence spans 601 residues: Glutamine--fructose-6-phosphate aminotransferase [isomerizing] (601 aa).

Cys2 (nucleophile; for GATase activity) is an active-site residue. One can recognise a Glutamine amidotransferase type-2 domain in the interval 2 to 218; that stretch reads CGIVGYIGYD…DHEIVIVKRD (217 aa). 2 consecutive SIS domains span residues 284-423 and 453-591; these read IIND…NHGR and IATD…VDKP. The active-site For Fru-6P isomerization activity is the Lys596.

In terms of assembly, homodimer.

The protein localises to the cytoplasm. The catalysed reaction is D-fructose 6-phosphate + L-glutamine = D-glucosamine 6-phosphate + L-glutamate. In terms of biological role, catalyzes the first step in hexosamine metabolism, converting fructose-6P into glucosamine-6P using glutamine as a nitrogen source. This chain is Glutamine--fructose-6-phosphate aminotransferase [isomerizing], found in Staphylococcus epidermidis (strain ATCC 35984 / DSM 28319 / BCRC 17069 / CCUG 31568 / BM 3577 / RP62A).